The chain runs to 146 residues: D-aminoacyl-tRNA deacylase (146 aa).

Positions 138–139 (GP) match the Gly-cisPro motif, important for rejection of L-amino acids motif.

The protein belongs to the DTD family. Homodimer.

The protein localises to the cytoplasm. The enzyme catalyses glycyl-tRNA(Ala) + H2O = tRNA(Ala) + glycine + H(+). It carries out the reaction a D-aminoacyl-tRNA + H2O = a tRNA + a D-alpha-amino acid + H(+). An aminoacyl-tRNA editing enzyme that deacylates mischarged D-aminoacyl-tRNAs. Also deacylates mischarged glycyl-tRNA(Ala), protecting cells against glycine mischarging by AlaRS. Acts via tRNA-based rather than protein-based catalysis; rejects L-amino acids rather than detecting D-amino acids in the active site. By recycling D-aminoacyl-tRNA to D-amino acids and free tRNA molecules, this enzyme counteracts the toxicity associated with the formation of D-aminoacyl-tRNA entities in vivo and helps enforce protein L-homochirality. This Xanthomonas campestris pv. campestris (strain 8004) protein is D-aminoacyl-tRNA deacylase.